A 176-amino-acid polypeptide reads, in one-letter code: Shikimate kinase (176 aa).

17–24 (GMMGVGKS) contacts ATP.

Belongs to the shikimate kinase family.

The protein resides in the cytoplasm. It carries out the reaction shikimate + ATP = 3-phosphoshikimate + ADP + H(+). Its pathway is metabolic intermediate biosynthesis; chorismate biosynthesis; chorismate from D-erythrose 4-phosphate and phosphoenolpyruvate: step 5/7. This is Shikimate kinase from Zymomonas mobilis subsp. mobilis (strain ATCC 31821 / ZM4 / CP4).